A 107-amino-acid polypeptide reads, in one-letter code: Envelope small membrane protein (107 aa).

Topologically, residues 1–11 (MMNLVNKSLEE) are virion surface. Residues 12-32 (NGSFLTAVYIFCAFVALYLLG) traverse the membrane as a helical segment. The Intravirion portion of the chain corresponds to 33 to 107 (RALHAFVQAA…NFQNDGKLHS (75 aa)).

The protein belongs to the gammacoronaviruses E protein family. Homooligomer. Interacts with the M membrane protein in the budding compartment of the host cell, which is located between endoplasmic reticulum and the Golgi complex. The cytoplasmic tails of both proteins are important for this function. Interacts with Nucleoprotein.

Its subcellular location is the host Golgi apparatus membrane. In terms of biological role, plays a central role in virus morphogenesis and assembly. Acts as a viroporin and self-assembles in host membranes forming pentameric protein-lipid pores that allow ion transport. Also plays a role in the induction of apoptosis. The polypeptide is Envelope small membrane protein (Gallus gallus (Chicken)).